Here is a 492-residue protein sequence, read N- to C-terminus: 3,6-anhydro-alpha-L-galactose dehydrogenase (492 aa).

NADP(+) is bound by residues 160-161, 184-187, and 237-238; these read WN, KPSE, and GS. Residue Glu259 is the Proton acceptor of the active site. Residue Leu260 coordinates NADP(+). Cys293 functions as the Nucleophile in the catalytic mechanism. Glu394 contributes to the NADP(+) binding site.

The protein belongs to the aldehyde dehydrogenase family.

It catalyses the reaction 3,6-anhydro-alpha-L-galactopyranose + NADP(+) + H2O = 3,6-anhydro-L-galactonate + NADPH + 2 H(+). Its activity is regulated as follows. Significantly inhibited by EDTA. Activity is enhanced by Fe(2+), but is strongly inhibited by Mn(2+), Cu(2+), Zn(2+), Ni(2+) and Co(2+). In terms of biological role, involved in the degradation of 3,6-anhydro-L-galactose, which is the major monomeric sugar of red macroalgae. Catalyzes the oxidation of 3,6-anhydro-L-galactose (AHG) to form 3,6-anhydrogalactonate (AHGA). Shows broad substrate specificity, with maximum activity toward AHG. The enzyme activities toward D-fructose, D-galactose and D-ribose are between 40% and 50% of the maximum, but those toward L-rhamnose, L-glyceraldehyde, D-glyceraldehyde, L-fucose and D-glucose are much lower. The polypeptide is 3,6-anhydro-alpha-L-galactose dehydrogenase (Streptomyces coelicolor (strain ATCC BAA-471 / A3(2) / M145)).